A 162-amino-acid chain; its full sequence is MSIFNEARLETWNELKGLSDEKLNQKPSAEEWSIREVLDHLKKIDMTAQKMLKERVKDAPIKEIEEKPLEVAQDRNNKRKAPSHLEPAHDFISGSQMKRELDVVREQLTAAIASLKEEDFERVLPHPVFQELTVRQWIDFIGHHEKRHLSQMKEIKEKIERA.

The segment covering 65 to 76 has biased composition (basic and acidic residues); the sequence is EEKPLEVAQDRN. The interval 65 to 93 is disordered; it reads EEKPLEVAQDRNNKRKAPSHLEPAHDFIS.

This is an uncharacterized protein from Bacillus subtilis (strain 168).